The primary structure comprises 406 residues: MKKILQSIVFKRLSWTVLFLFIYVLGSHLVLPFIDLKHPKLLGGLSNSIAFTSAMMGGNLSSFSLFSVGLSPWMSAMILWQMFSFSKKSGLSKLPIEIQDRRKMYLTFAIALIQSLAVSLSLPIEVGIPKGLAILTNTILLIAGTFFLVWLSDLNSFFGIGGSIVILMASMVANLPRQIGESITRLHIGLPIILSLIIMGLLFLYIAVIVQRARYRIPINKVNIHNRFSQYSYLDVMLTPAGGMPFMYAISLVSIPQYLLILIQILFPKNSWTNTWIEALTVGHPIWLVLYQVVLFVLGIAFAFVNVSGEQIAERMRKSGEYIYNVYPGPDTSRYINKVVMKFAVIGAIYTVIMAGGPMMIVLINPQYLQLSMIPGMFLIYSGMVYNVREEIAAMTLNESYKGLFD.

The next 10 helical transmembrane spans lie at 14 to 34 (SWTV…LPFI), 63 to 83 (FSLF…WQMF), 108 to 128 (FAIA…EVGI), 131 to 151 (GLAI…LVWL), 156 to 176 (SFFG…ANLP), 190 to 210 (LPII…AVIV), 246 to 266 (FMYA…IQIL), 285 to 305 (PIWL…FAFV), 344 to 364 (AVIG…IVLI), and 368 to 388 (YLQL…VYNV).

Belongs to the SecY/SEC61-alpha family. SecY2 subfamily. Component of the accessory SecA2/SecY2 protein translocase complex required to export cell wall proteins. May form heterotrimers with SecE and SecG subunits.

The protein resides in the cell membrane. In terms of biological role, part of the accessory SecA2/SecY2 system specifically required for export of possible cell wall proteins. The central subunit of a protein translocation channel. The polypeptide is Accessory Sec system protein translocase subunit SecY2 (Streptococcus salivarius (strain CCHSS3)).